We begin with the raw amino-acid sequence, 120 residues long: NAD(P)H-quinone oxidoreductase subunit 3, chloroplastic (120 aa).

The next 3 helical transmembrane spans lie at 10–30 (FWAF…ISGV), 64–84 (MFAL…PWAM), and 88–108 (VLGV…IGGL).

This sequence belongs to the complex I subunit 3 family. As to quaternary structure, NDH is composed of at least 16 different subunits, 5 of which are encoded in the nucleus.

It is found in the plastid. Its subcellular location is the chloroplast thylakoid membrane. It carries out the reaction a plastoquinone + NADH + (n+1) H(+)(in) = a plastoquinol + NAD(+) + n H(+)(out). The enzyme catalyses a plastoquinone + NADPH + (n+1) H(+)(in) = a plastoquinol + NADP(+) + n H(+)(out). In terms of biological role, NDH shuttles electrons from NAD(P)H:plastoquinone, via FMN and iron-sulfur (Fe-S) centers, to quinones in the photosynthetic chain and possibly in a chloroplast respiratory chain. The immediate electron acceptor for the enzyme in this species is believed to be plastoquinone. Couples the redox reaction to proton translocation, and thus conserves the redox energy in a proton gradient. This is NAD(P)H-quinone oxidoreductase subunit 3, chloroplastic from Ipomoea purpurea (Common morning glory).